A 230-amino-acid chain; its full sequence is Ureidoacrylate amidohydrolase RutB (230 aa).

Aspartate 24 serves as the catalytic Proton acceptor. Residue lysine 133 is part of the active site. Catalysis depends on cysteine 166, which acts as the Nucleophile.

The protein belongs to the isochorismatase family. RutB subfamily.

It carries out the reaction (Z)-3-ureidoacrylate + H2O + H(+) = (Z)-3-aminoacrylate + NH4(+) + CO2. The enzyme catalyses (Z)-3-ureidoacrylate + H2O = (Z)-3-aminoacrylate + carbamate + H(+). The catalysed reaction is (Z)-2-methylureidoacrylate + H2O + H(+) = (Z)-2-methylaminoacrylate + NH4(+) + CO2. Its function is as follows. Hydrolyzes ureidoacrylate to form aminoacrylate and carbamate. The carbamate hydrolyzes spontaneously, thereby releasing one of the nitrogen atoms of the pyrimidine ring as ammonia and one of its carbon atoms as CO2. The polypeptide is Ureidoacrylate amidohydrolase RutB (Escherichia coli O81 (strain ED1a)).